The chain runs to 146 residues: Hemoglobin subunit beta (146 aa).

Positions 2-146 (HWSAEEKQLI…VAHALARKYH (145 aa)) constitute a Globin domain. His-63 and His-92 together coordinate heme b.

This sequence belongs to the globin family. As to quaternary structure, heterotetramer of two alpha chains and two beta chains. As to expression, red blood cells.

Involved in oxygen transport from the lung to the various peripheral tissues. The sequence is that of Hemoglobin subunit beta (HBB) from Streptopelia orientalis (Eastern turtle dove).